The chain runs to 725 residues: Beta-adducin (725 aa).

Residues 1 to 22 (MSEDTVPEAASPPPSQGQHYFD) are disordered. S11 and S25 each carry phosphoserine. T55 bears the Phosphothreonine mark. 2 positions are modified to phosphoserine: S60 and S344. Positions 425 to 444 (KQQKEKTRWLNTPNTYLRVN) are interaction with calmodulin. Residues 525 to 725 (AEKSRSPSTE…KSKKKEKVES (201 aa)) form a disordered region. Phosphoserine is present on residues S530 and S532. T533 bears the Phosphothreonine mark. Residue S535 is modified to Phosphoserine. Phosphothreonine is present on T561. Basic and acidic residues predominate over residues 566 to 588 (EEYKKEVERKKLEQEQEGEKDAA). S594, S598, S602, and S606 each carry phosphoserine. Residues 596–621 (VKSTPASPVQSPTRAGTKSPAVSPSK) show a composition bias toward polar residues. At T612 the chain carries Phosphothreonine. Phosphoserine is present on residues S614, S618, and S620. 2 stretches are compositionally biased toward basic and acidic residues: residues 622–631 (ASEDAKKTEV) and 639–654 (EPEK…KEEE). T674 bears the Phosphothreonine mark. S678, S685, S688, S692, S696, S698, S700, S702, and S712 each carry phosphoserine. Over residues 687-700 (TSGPLSPEGSPSKS) the composition is skewed to low complexity. Residues 701–725 (PSKKKKKFRTPSFLKKSKKKEKVES) show a composition bias toward basic residues. The interval 703–720 (KKKKKFRTPSFLKKSKKK) is interaction with calmodulin.

This sequence belongs to the aldolase class II family. Adducin subfamily. In terms of assembly, heterodimer of an alpha and a beta subunit. Found in a complex with ADD2, DMTN and SLC2A1. Interacts with SLC2A1. In terms of tissue distribution, found in liver, kidney, spleen, heart and brain.

Its subcellular location is the cytoplasm. It is found in the cytoskeleton. It localises to the cell membrane. Its function is as follows. Membrane-cytoskeleton-associated protein that promotes the assembly of the spectrin-actin network. Binds to the erythrocyte membrane receptor SLC2A1/GLUT1 and may therefore provide a link between the spectrin cytoskeleton to the plasma membrane. Binds to calmodulin. Calmodulin binds preferentially to the beta subunit. The sequence is that of Beta-adducin (Add2) from Rattus norvegicus (Rat).